The primary structure comprises 679 residues: Glycine--tRNA ligase beta subunit (679 aa).

The protein belongs to the class-II aminoacyl-tRNA synthetase family. As to quaternary structure, tetramer of two alpha and two beta subunits.

The protein localises to the cytoplasm. It catalyses the reaction tRNA(Gly) + glycine + ATP = glycyl-tRNA(Gly) + AMP + diphosphate. This chain is Glycine--tRNA ligase beta subunit, found in Streptococcus agalactiae serotype V (strain ATCC BAA-611 / 2603 V/R).